Here is a 400-residue protein sequence, read N- to C-terminus: Enoyl-[acyl-carrier-protein] reductase [NADH] 1 (400 aa).

NAD(+)-binding positions include 48–53 (GASSGY), 74–75 (FE), 111–112 (DA), and 139–140 (LA). Residue tyrosine 225 participates in substrate binding. The active-site Proton donor is tyrosine 235. Residues lysine 244 and 273 to 275 (VVT) contribute to the NAD(+) site.

This sequence belongs to the TER reductase family. As to quaternary structure, monomer.

The enzyme catalyses a 2,3-saturated acyl-[ACP] + NAD(+) = a (2E)-enoyl-[ACP] + NADH + H(+). It participates in lipid metabolism; fatty acid biosynthesis. In terms of biological role, involved in the final reduction of the elongation cycle of fatty acid synthesis (FAS II). Catalyzes the reduction of a carbon-carbon double bond in an enoyl moiety that is covalently linked to an acyl carrier protein (ACP). This Vibrio parahaemolyticus serotype O3:K6 (strain RIMD 2210633) protein is Enoyl-[acyl-carrier-protein] reductase [NADH] 1.